The primary structure comprises 178 residues: Translation initiation factor IF-3 (178 aa).

Residues 1-20 (MRRPFKTDAPVKDGPRSNRE) form a disordered region.

The protein belongs to the IF-3 family. Monomer.

The protein localises to the cytoplasm. Functionally, IF-3 binds to the 30S ribosomal subunit and shifts the equilibrium between 70S ribosomes and their 50S and 30S subunits in favor of the free subunits, thus enhancing the availability of 30S subunits on which protein synthesis initiation begins. This is Translation initiation factor IF-3 from Rhizobium leguminosarum bv. trifolii (strain WSM2304).